We begin with the raw amino-acid sequence, 196 residues long: Protein TEX261 (196 aa).

The next 5 membrane-spanning stretches (helical) occupy residues phenylalanine 3 to valine 23, serine 42 to phenylalanine 62, isoleucine 70 to isoleucine 90, phenylalanine 97 to glutamate 117, and valine 125 to serine 145.

This sequence belongs to the SVP26 family. In terms of tissue distribution, detected in testis.

It is found in the membrane. The protein is Protein TEX261 (Tex261) of Mus musculus (Mouse).